We begin with the raw amino-acid sequence, 375 residues long: LIM domain-binding protein 1 (375 aa).

Disordered regions lie at residues 248–294 and 331–375; these read PPAE…TFAL and DAAN…QASQ. Residues 266–282 show a composition bias toward low complexity; sequence SGGSTMSSGGGNTNNSN. Residues 300–339 enclose the LIM interaction domain (LID) domain; sequence DVMVVGEPTLMGGEFGDEDERLITRLENTQFDAANGIDDE.

The protein belongs to the LDB family. As to quaternary structure, forms homodimers and heterodimers. Interacts with the LIM domain of LIM/homeobox factor lhx1/lim1, and with lhx3/lim3 and lhx5/lim5. Activates lhx1/lim1 by binding. The stoichiometry of lhx1/lim1 and ldb1 is important for their function and an excess of ldb1 can inhibit lhx1/lim1 function. When bound to lhx1/lim1, escapes degradation by rnf12. The N-terminus interacts with the N-terminal region of rnf12. In terms of processing, undergoes rnf12-mediated ubiquitin-proteasome-dependent degradation. Ubiquitously expressed in the early gastrula before localizing to the dorsal region of the vegetal hemisphere, which contains the Spemann organizer. Expressed in the CNS, pronephros and tail bud in neurula and tail-bud stage embryos. Expressed in multiple adult tissues including brain, heart, lung, stomach, intestine, liver, spleen, kidney, ovary, muscle and skin.

The protein resides in the nucleus. Functionally, binds to the LIM domain of a wide variety of LIM domain-containing transcription factors. Acts as a coactivator together with otx2 to stimulate lhx1/lim1-mediated activation of the gsc promoter in the Spemann organizer. Acts synergistically with lhx1/lim1 and ssbp in axis formation. The polypeptide is LIM domain-binding protein 1 (ldb1) (Xenopus laevis (African clawed frog)).